Reading from the N-terminus, the 1724-residue chain is Sperm flagellar protein 2 (1724 aa).

Residues 1 to 105 (MSEILCQWLN…LLYQLYIALQ (105 aa)) enclose the Calponin-homology (CH) domain. Coiled-coil stretches lie at residues 170–203 (KAIEAQKLMKKKKEAEDVANEIKKFEALIKKDLQ) and 255–351 (RRLL…REKE). Positions 545-576 (HERQKSGKTPPTQEDDKRDPVVNQEKVSKTQD) are disordered. Positions 558 to 576 (EDDKRDPVVNQEKVSKTQD) are enriched in basic and acidic residues. Residues 665 to 691 (NQAKLLEEALTGYKRKFLQLKKKKEQM) are a coiled coil. Positions 828–910 (EEKETEKKAG…PTAPPPPKAG (83 aa)) are disordered. Basic and acidic residues predominate over residues 853 to 862 (EAEKDKELHQ). A coiled-coil region spans residues 995–1021 (EDLWEDEETKAELHQRVNDLRDRLWDI). Residues 1177-1194 (RLTEEEKEPPQLDSKEKS) show a composition bias toward basic and acidic residues. Disordered stretches follow at residues 1177–1241 (RLTE…EMAE), 1580–1618 (VSPIEEFPETEESSAKEDRELKEEKDDQKEEEIPENANT), and 1704–1724 (SEHAQGSDGERSPSRLTDEKK). The segment covering 1210 to 1221 (PKKKKTDKKGKG) has biased composition (basic residues). The segment at 1228 to 1580 (EVSPVTVTPE…MAEKTSISTV (353 aa)) is interaction with IFT20. The segment covering 1592–1607 (SSAKEDRELKEEKDDQ) has biased composition (basic and acidic residues).

As to quaternary structure, interacts (via C-terminus) with IFT20. Interacts with DYNC1I2. In terms of tissue distribution, highly expressed in testis, where it primarily localizes to late spermatocytes, round spermatids and elongating spermatids (at protein level). Found in Sertoli cells of the testis (at protein level). Expressed at lower levels in epididymis (at protein level). Detected in lung, brain, liver and kidney. Also detected in bone, cartilage, trachea, pituitary gland and eye. Expressed in osteoblasts and chondrocytes.

It is found in the cell projection. Its subcellular location is the cilium. The protein resides in the flagellum. It localises to the cytoplasm. The protein localises to the cytoskeleton. It is found in the golgi apparatus. Functionally, required for correct axoneme development in spermatozoa. Important for normal development of the manchette and sperm head morphology. Essential for male fertility. Plays a role in localization of the intraflagellar transport protein IFT20 to the manchette, suggesting function as an adapter for dynein-mediated protein transport during spermatogenesis. Also plays a role in bone growth where it seems to be required for normal osteoblast differentiation. The protein is Sperm flagellar protein 2 (Spef2) of Mus musculus (Mouse).